A 121-amino-acid chain; its full sequence is uncharacterized protein (121 aa).

The HIT domain occupies 7-121; it reads IFCKIVRGEV…GGREMSWPPG (115 aa). The Histidine triad motif motif lies at 105-109; it reads HLHLH.

This is an uncharacterized protein from Aquifex aeolicus (strain VF5).